Reading from the N-terminus, the 388-residue chain is Mannitol-1-phosphate 5-dehydrogenase (388 aa).

Residue 4–15 coordinates NAD(+); that stretch reads AVHFGAGNIGRG.

Belongs to the mannitol dehydrogenase family.

It catalyses the reaction D-mannitol 1-phosphate + NAD(+) = beta-D-fructose 6-phosphate + NADH + H(+). The sequence is that of Mannitol-1-phosphate 5-dehydrogenase from Lactococcus lactis subsp. cremoris (strain MG1363).